A 258-amino-acid polypeptide reads, in one-letter code: MKQKVYRLLIDTQEAWPFERTRIPSFKKLSDSERQQIERYYFDMDAKMALASILIKRHLVSTALECSPNEVQISVTKAGRPYCQSAHCPPIIFDFNVSHYGGIVIVVGAWLPSDPSGMRPINIGVDIVECKPLAFEASWMEDFMSVFTPCEWKLIKSSISSIDVFFLLWTCKEAILKALGIGLSGNPLDIVVTFHKLNELLNSEEVSLRRAATAVYSGYSWDLEIHKLILHSSTFYVSVAFPQDCVIMDLNWETLNDL.

Belongs to the P-Pant transferase superfamily. AcpS family.

The protein localises to the cytoplasm. Its subcellular location is the nucleus. The enzyme catalyses apo-[ACP] + CoA = holo-[ACP] + adenosine 3',5'-bisphosphate + H(+). In terms of biological role, catalyzes the transfer of a 4'-phosphopantetheine moiety from coenzyme A to a serine residue of acceptor proteins, such as alpha-aminoadipate reductase. Necessary for alpha-aminoadipate reductase activity. This chain is L-aminoadipate-semialdehyde dehydrogenase-phosphopantetheinyl transferase (lys7), found in Schizosaccharomyces pombe (strain 972 / ATCC 24843) (Fission yeast).